The following is a 152-amino-acid chain: 6,7-dimethyl-8-ribityllumazine synthase (152 aa).

Residues F21, A55–E57, and C79–I81 contribute to the 5-amino-6-(D-ribitylamino)uracil site. A84–T85 lines the (2S)-2-hydroxy-3-oxobutyl phosphate pocket. H87 functions as the Proton donor in the catalytic mechanism. F112 lines the 5-amino-6-(D-ribitylamino)uracil pocket. R126 contributes to the (2S)-2-hydroxy-3-oxobutyl phosphate binding site.

This sequence belongs to the DMRL synthase family. As to quaternary structure, forms an icosahedral capsid composed of 60 subunits, arranged as a dodecamer of pentamers.

The enzyme catalyses (2S)-2-hydroxy-3-oxobutyl phosphate + 5-amino-6-(D-ribitylamino)uracil = 6,7-dimethyl-8-(1-D-ribityl)lumazine + phosphate + 2 H2O + H(+). It functions in the pathway cofactor biosynthesis; riboflavin biosynthesis; riboflavin from 2-hydroxy-3-oxobutyl phosphate and 5-amino-6-(D-ribitylamino)uracil: step 1/2. Catalyzes the formation of 6,7-dimethyl-8-ribityllumazine by condensation of 5-amino-6-(D-ribitylamino)uracil with 3,4-dihydroxy-2-butanone 4-phosphate. This is the penultimate step in the biosynthesis of riboflavin. The protein is 6,7-dimethyl-8-ribityllumazine synthase of Staphylococcus carnosus (strain TM300).